A 439-amino-acid chain; its full sequence is Probable anion transporter 7 (439 aa).

Positions 1–28 (MTALTRMKFPKRYVIVLLTFICTNVCYI) are cleaved as a signal peptide. Helical transmembrane passes span 53 to 73 (MILSMFYYGYVLSQIPGGWAA), 81 to 101 (VLLLSFVLWSLICGLIPLDPK), 104 to 124 (VILVLSRLFVGVAQGFIFPAI), 143 to 163 (LTTSGMYLGAAGGMLFFPSLV), 167 to 187 (GAQSVFFVEAVLGVAWSVIWL), 232 to 252 (IIFSLPVWAIVVNNFTFHYAL), 280 to 300 (LPYFNMFIFSNIGGVVADHLI), 312 to 332 (KLLNTIGFVVSAVALMALPLF), 338 to 358 (TVLCSSISLGFLALGRAGFAV), 367 to 387 (FAGIVMGVSNTAGTLAGIVGV), and 412 to 432 (TVFFVPGYLCIFSSIIFLIFS).

Belongs to the major facilitator superfamily. Sodium/anion cotransporter (TC 2.A.1.14) family.

The protein localises to the cell membrane. In terms of biological role, probable anion transporter. This is Probable anion transporter 7 (PHT4;7) from Oryza sativa subsp. japonica (Rice).